The following is a 213-amino-acid chain: Ribosomal RNA small subunit methyltransferase G (213 aa).

S-adenosyl-L-methionine is bound by residues Gly-81, Leu-86, 132 to 133 (VE), and Arg-147.

This sequence belongs to the methyltransferase superfamily. RNA methyltransferase RsmG family.

It localises to the cytoplasm. The enzyme catalyses guanosine(527) in 16S rRNA + S-adenosyl-L-methionine = N(7)-methylguanosine(527) in 16S rRNA + S-adenosyl-L-homocysteine. Its function is as follows. Specifically methylates the N7 position of guanine in position 527 of 16S rRNA. The protein is Ribosomal RNA small subunit methyltransferase G of Mannheimia succiniciproducens (strain KCTC 0769BP / MBEL55E).